The chain runs to 416 residues: RNA polymerase sigma-C factor (416 aa).

A Polymerase core binding motif is present at residues 205–218; the sequence is DLVQEGTLGLERAV. Residues 374-393 constitute a DNA-binding region (H-T-H motif); it reads LAEIGRALDLSRERVRQIES.

Belongs to the sigma-70 factor family.

Functionally, sigma factors are initiation factors that promote the attachment of RNA polymerase to specific initiation sites and are then released. The sequence is that of RNA polymerase sigma-C factor (sigC) from Nostoc sp. (strain PCC 7120 / SAG 25.82 / UTEX 2576).